The primary structure comprises 369 residues: Coproporphyrin III ferrochelatase (369 aa).

Fe-coproporphyrin III is bound by residues Ser-61 and Tyr-130. Positions 197 and 286 each coordinate Fe(2+).

This sequence belongs to the ferrochelatase family.

The protein localises to the cytoplasm. It catalyses the reaction Fe-coproporphyrin III + 2 H(+) = coproporphyrin III + Fe(2+). It participates in porphyrin-containing compound metabolism; protoheme biosynthesis. Involved in coproporphyrin-dependent heme b biosynthesis. Catalyzes the insertion of ferrous iron into coproporphyrin III to form Fe-coproporphyrin III. In Corynebacterium diphtheriae (strain ATCC 700971 / NCTC 13129 / Biotype gravis), this protein is Coproporphyrin III ferrochelatase.